Consider the following 317-residue polypeptide: Small ribosomal subunit protein uS2 (317 aa).

An N-acetylserine modification is found at serine 2. Laminin-binding stretches follow at residues 161–180 and 205–229; these read IPCN…MLSR and RDPE…EFQG. 2 [DE]-W-[ST] repeats span residues 230–232 and 245–247; these read EWT and DWS. Residues 242–317 are laminin-binding; it reads EVADWSEGVA…EWGGASADWS (76 aa). Positions 271–284 are enriched in low complexity; that stretch reads EAAAPSKAPAAAEG. The disordered stretch occupies residues 271–317; the sequence is EAAAPSKAPAAAEGFAEDWSAQPATEDWSAAPTAQATEWGGASADWS. [DE]-W-[ST] repeat units follow at residues 288-290, 297-299, and 315-317; these read DWS.

It belongs to the universal ribosomal protein uS2 family. As to quaternary structure, monomer (37LRP) and homodimer (67LR). Component of the small ribosomal subunit. Mature ribosomes consist of a small (40S) and a large (60S) subunit. The 40S subunit contains about 33 different proteins and 1 molecule of RNA (18S). The 60S subunit contains about 49 different proteins and 3 molecules of RNA (28S, 5.8S and 5S). Interacts with rps21. Interacts with several laminins including at least lamb1. Interacts with mdk. Acylated. Acylation may be a prerequisite for conversion of the monomeric 37 kDa laminin receptor precursor (37LRP) to the mature dimeric 67 kDa laminin receptor (67LR), and may provide a mechanism for membrane association. Post-translationally, cleaved by stromelysin-3 (ST3) at the cell surface. Cleavage by stromelysin-3 may be a mechanism to alter cell-extracellular matrix interactions.

It localises to the cell membrane. It is found in the cytoplasm. Its subcellular location is the nucleus. Required for the assembly and/or stability of the 40S ribosomal subunit. Required for the processing of the 20S rRNA-precursor to mature 18S rRNA in a late step of the maturation of 40S ribosomal subunits. Also functions as a cell surface receptor for laminin. Plays a role in cell adhesion to the basement membrane and in the consequent activation of signaling transduction pathways. May play a role in cell fate determination and tissue morphogenesis. The chain is Small ribosomal subunit protein uS2 (rpsa) from Salmo salar (Atlantic salmon).